A 253-amino-acid chain; its full sequence is Sulfate transporter CysZ (253 aa).

4 consecutive transmembrane segments (helical) span residues Phe-27–Val-47, Ile-71–Val-91, Leu-150–Phe-170, and Ile-211–Ala-231.

Belongs to the CysZ family.

The protein resides in the cell inner membrane. Functionally, high affinity, high specificity proton-dependent sulfate transporter, which mediates sulfate uptake. Provides the sulfur source for the cysteine synthesis pathway. The sequence is that of Sulfate transporter CysZ from Pseudomonas syringae pv. tomato (strain ATCC BAA-871 / DC3000).